Reading from the N-terminus, the 176-residue chain is ATP-dependent protease subunit HslV (176 aa).

T2 is a catalytic residue. Na(+)-binding residues include G157, C160, and T163.

The protein belongs to the peptidase T1B family. HslV subfamily. In terms of assembly, a double ring-shaped homohexamer of HslV is capped on each side by a ring-shaped HslU homohexamer. The assembly of the HslU/HslV complex is dependent on binding of ATP.

The protein localises to the cytoplasm. The catalysed reaction is ATP-dependent cleavage of peptide bonds with broad specificity.. With respect to regulation, allosterically activated by HslU binding. Protease subunit of a proteasome-like degradation complex believed to be a general protein degrading machinery. The protein is ATP-dependent protease subunit HslV of Pseudomonas savastanoi pv. phaseolicola (strain 1448A / Race 6) (Pseudomonas syringae pv. phaseolicola (strain 1448A / Race 6)).